The chain runs to 321 residues: Lipoyl synthase (321 aa).

Cysteine 68, cysteine 73, cysteine 79, cysteine 94, cysteine 98, cysteine 101, and serine 308 together coordinate [4Fe-4S] cluster. The Radical SAM core domain maps to 80 to 297; it reads FNHGTATFMI…KAAAMDMGFT (218 aa).

This sequence belongs to the radical SAM superfamily. Lipoyl synthase family. Requires [4Fe-4S] cluster as cofactor.

The protein localises to the cytoplasm. It catalyses the reaction [[Fe-S] cluster scaffold protein carrying a second [4Fe-4S](2+) cluster] + N(6)-octanoyl-L-lysyl-[protein] + 2 oxidized [2Fe-2S]-[ferredoxin] + 2 S-adenosyl-L-methionine + 4 H(+) = [[Fe-S] cluster scaffold protein] + N(6)-[(R)-dihydrolipoyl]-L-lysyl-[protein] + 4 Fe(3+) + 2 hydrogen sulfide + 2 5'-deoxyadenosine + 2 L-methionine + 2 reduced [2Fe-2S]-[ferredoxin]. Its pathway is protein modification; protein lipoylation via endogenous pathway; protein N(6)-(lipoyl)lysine from octanoyl-[acyl-carrier-protein]: step 2/2. Its function is as follows. Catalyzes the radical-mediated insertion of two sulfur atoms into the C-6 and C-8 positions of the octanoyl moiety bound to the lipoyl domains of lipoate-dependent enzymes, thereby converting the octanoylated domains into lipoylated derivatives. This Erwinia tasmaniensis (strain DSM 17950 / CFBP 7177 / CIP 109463 / NCPPB 4357 / Et1/99) protein is Lipoyl synthase.